The primary structure comprises 510 residues: 2-isopropylmalate synthase (510 aa).

One can recognise a Pyruvate carboxyltransferase domain in the interval 5-267 (LVIFDTTLRD…DTRIDTTQIV (263 aa)). Residues D14, H202, H204, and N238 each coordinate Mn(2+). Residues 392–510 (RLLSLVAHSE…SSLERTHPQV (119 aa)) are regulatory domain.

This sequence belongs to the alpha-IPM synthase/homocitrate synthase family. LeuA type 1 subfamily. In terms of assembly, homodimer. It depends on Mn(2+) as a cofactor.

The protein resides in the cytoplasm. The enzyme catalyses 3-methyl-2-oxobutanoate + acetyl-CoA + H2O = (2S)-2-isopropylmalate + CoA + H(+). The protein operates within amino-acid biosynthesis; L-leucine biosynthesis; L-leucine from 3-methyl-2-oxobutanoate: step 1/4. Functionally, catalyzes the condensation of the acetyl group of acetyl-CoA with 3-methyl-2-oxobutanoate (2-ketoisovalerate) to form 3-carboxy-3-hydroxy-4-methylpentanoate (2-isopropylmalate). This Nitrosomonas eutropha (strain DSM 101675 / C91 / Nm57) protein is 2-isopropylmalate synthase.